A 708-amino-acid polypeptide reads, in one-letter code: Prolyl 3-hydroxylase 2 (708 aa).

The signal sequence occupies residues 1–24 (MRERIWAPPLLLLLPLLLPPPLWG). TPR repeat units lie at residues 44 to 77 (FDLL…HRRL), 148 to 181 (RVPY…NPEH), 210 to 243 (HMES…YFVE), and 306 to 339 (PLHY…HPDD). N-linked (GlcNAc...) asparagine glycans are attached at residues asparagine 449 and asparagine 549. One can recognise a Fe2OG dioxygenase domain in the interval 557–671 (THMVCRTALS…RCAVALWFTL (115 aa)). Fe cation is bound by residues histidine 580, aspartate 582, and histidine 652. Arginine 662 is a catalytic residue. Residues 705–708 (KDEL) carry the Prevents secretion from ER motif.

This sequence belongs to the leprecan family. Requires Fe cation as cofactor. L-ascorbate is required as a cofactor. As to expression, expression localized to the epithelia of bile ducts and to the sacroplasm of heart muscle and skeletal muscle. In the pancreas, localized to a subpopulation of Langerhans islet cells and in the salivary gland, expressed in acinar cells (at protein level). Expressed in adult heart, placenta, lung, liver, skeletal muscle and kidney. Detected in fetal heart, spleen, lung, liver skeletal muscle and kidney.

The protein localises to the endoplasmic reticulum. The protein resides in the sarcoplasmic reticulum. Its subcellular location is the golgi apparatus. It catalyses the reaction L-prolyl-[collagen] + 2-oxoglutarate + O2 = trans-3-hydroxy-L-prolyl-[collagen] + succinate + CO2. With respect to regulation, inhibited by pyridine 2,4-dicarboxylate, an analog of 2-oxoglutarate. In terms of biological role, prolyl 3-hydroxylase that catalyzes the post-translational formation of 3-hydroxyproline on collagens. Contributes to proline 3-hydroxylation of collagen COL4A1 and COL1A1 in tendons, the eye sclera and in the eye lens capsule. Has high activity with the type IV collagen COL4A1, and lower activity with COL1A1. Catalyzes hydroxylation of the first Pro in Gly-Pro-Hyp sequences where Hyp is 4-hydroxyproline. Has no activity on substrates that lack 4-hydroxyproline in the third position. This is Prolyl 3-hydroxylase 2 from Homo sapiens (Human).